The following is a 292-amino-acid chain: Sulfofructosephosphate aldolase (292 aa).

Lys193 functions as the Schiff-base intermediate with substrate in the catalytic mechanism.

Belongs to the aldolase LacD family. As to quaternary structure, homotetramer.

It catalyses the reaction 6-deoxy-6-sulfo-D-fructose 1-phosphate = (2S)-3-sulfolactaldehyde + dihydroxyacetone phosphate. Its function is as follows. Cleaves 6-deoxy-6-sulfo-D-fructose 1-phosphate (SFP) to form dihydroxyacetone phosphate (DHAP) and 3-sulfolactaldehyde (SLA). This is Sulfofructosephosphate aldolase (yihT) from Escherichia coli (strain K12).